The sequence spans 354 residues: Guanine nucleotide-binding protein alpha-3 subunit (354 aa).

The N-myristoyl glycine moiety is linked to residue glycine 2. Cysteine 4 is lipidated: S-palmitoyl cysteine. Positions lysine 33–leucine 354 constitute a G-alpha domain. A G1 motif region spans residues lysine 36 to threonine 49. GTP contacts are provided by residues glycine 41 to serine 48, leucine 177 to threonine 183, aspartate 202 to glutamine 206, asparagine 271 to aspartate 274, and alanine 326. Mg(2+) contacts are provided by serine 48 and threonine 183. The tract at residues aspartate 175 to threonine 183 is G2 motif. The tract at residues isoleucine 198 to arginine 207 is G3 motif. The segment at isoleucine 267–aspartate 274 is G4 motif. The interval threonine 324–threonine 329 is G5 motif.

This sequence belongs to the G-alpha family. G proteins are composed of 3 units; alpha, beta and gamma. The alpha chain contains the guanine nucleotide binding site.

Guanine nucleotide-binding proteins (G proteins) are involved as modulators or transducers in various transmembrane signaling systems. GPA3 plays an active role in transmission of the pheromone signal. This Mycosarcoma maydis (Corn smut fungus) protein is Guanine nucleotide-binding protein alpha-3 subunit (GPA3).